We begin with the raw amino-acid sequence, 655 residues long: MLHQGIILREGHVTRTIYNLIKDKRYEDVIECITSFGEAANTRAGLSTLGHCYYHAQKYEEAATCYEQLCQLAPKEAKYRFYYAQSLYQAGIFADALRVLKQMGDQEDELREQCLQLQSAILYSSEDFAGAQSLLNQRAGGTADTLNDEGCLLFQADQHEAAVQRFQAALQVGGFNPLVAYNVALAHFQKKQRAQALDYTSEIVERGMRNHPELGIGAQMDIPDGGARSVGNPITMAISGITQALNLKAAIEFQDGNEEAARDALLDLPPRAESELDPVTLHNMALTDVEGPVAGLRKLAFLLELGAPSCPKETFANILLICCKNELYETAADILAEHTDLTYKYLSQYLYELLDSLITAQTSAELAEKKLGTLASSLAGKLRSLAAKVQEVRATNEQQALRDALKDYEQALELYLPVVMARAWISWRDDDFVGAEREFHASAEFCSENSIWRLNAGHVLFMQGDKYNEAAAFYEPIVRQHSDDIMSVSAAVLANLCVSYIMTFQNEEAEELMRKVEKAEEMKGNLGKQYHHLCIVNLVVGTLYCAKSNYEFGLSRIAHALESGSGNRLYADTWLHVKHCILGLLTGMAKQNIILPYATVQEVLNFLRFCESYGLFTPANIFSATEQVPEEPLTIGLEARKLRLLLIKLSEYDNF.

TPR repeat units follow at residues 10–43 (EGHV…ANTR), 44–76 (AGLS…APKE), 143–176 (ADTL…GGFN), 178–210 (LVAY…GMRN), 385–418 (LAAK…YLPV), 450–484 (SIWR…HSDD), and 534–567 (CIVN…GSGN).

The protein belongs to the TTC30/dfy-1/fleer family.

Its subcellular location is the cell projection. The protein resides in the cilium. Functionally, required for polyglutamylation of axonemal tubulin in sensory cilia. Plays a role in anterograde intraflagellar transport (IFT), the process by which cilia precursors are transported from the base of the cilium to the site of their incorporation at the tip. This Drosophila melanogaster (Fruit fly) protein is Tetratricopeptide repeat protein 30 homolog.